We begin with the raw amino-acid sequence, 419 residues long: BTB/POZ domain-containing protein KCTD20 (419 aa).

In terms of domain architecture, BTB spans 117–191; sequence EKVTLLVDGT…YKTGIINCPD (75 aa).

Interacts with AKT1; AKT2 and AKT3. Interacts with PPP2CA and PPP1CA. Part of a complex containing MARK4. Ubiquitously expressed.

It localises to the cytoplasm. In terms of biological role, promotes the phosphorylation of AKT family members. This chain is BTB/POZ domain-containing protein KCTD20 (Kctd20), found in Mus musculus (Mouse).